The primary structure comprises 208 residues: Imidazoleglycerol-phosphate dehydratase (208 aa).

This sequence belongs to the imidazoleglycerol-phosphate dehydratase family.

It localises to the cytoplasm. It catalyses the reaction D-erythro-1-(imidazol-4-yl)glycerol 3-phosphate = 3-(imidazol-4-yl)-2-oxopropyl phosphate + H2O. The protein operates within amino-acid biosynthesis; L-histidine biosynthesis; L-histidine from 5-phospho-alpha-D-ribose 1-diphosphate: step 6/9. This is Imidazoleglycerol-phosphate dehydratase from Symbiobacterium thermophilum (strain DSM 24528 / JCM 14929 / IAM 14863 / T).